A 217-amino-acid polypeptide reads, in one-letter code: 3,4-dihydroxy-2-butanone 4-phosphate synthase (217 aa).

D-ribulose 5-phosphate is bound by residues 37 to 38, aspartate 42, 150 to 154, and glutamate 174; these read RE and RGGHT. Glutamate 38 contacts Mg(2+). Histidine 153 contacts Mg(2+).

The protein belongs to the DHBP synthase family. In terms of assembly, homodimer. Mg(2+) serves as cofactor. Mn(2+) is required as a cofactor.

It catalyses the reaction D-ribulose 5-phosphate = (2S)-2-hydroxy-3-oxobutyl phosphate + formate + H(+). It functions in the pathway cofactor biosynthesis; riboflavin biosynthesis; 2-hydroxy-3-oxobutyl phosphate from D-ribulose 5-phosphate: step 1/1. Catalyzes the conversion of D-ribulose 5-phosphate to formate and 3,4-dihydroxy-2-butanone 4-phosphate. The protein is 3,4-dihydroxy-2-butanone 4-phosphate synthase of Klebsiella pneumoniae (strain 342).